We begin with the raw amino-acid sequence, 1004 residues long: Kinesin-like protein KIN-14R (1004 aa).

3 disordered regions span residues 1–21, 61–90, and 110–169; these read MEEE…RIGD, PYVD…MQHD, and ELFS…ATMG. Positions 63–75 are enriched in acidic residues; it reads VDDDDDGNSEEEN. The segment covering 115–125 has biased composition (pro residues); that stretch reads PSPPQGPPSPS. Coiled coils occupy residues 189 to 230 and 266 to 338; these read CGQL…AQAS and LNDL…LYNK. Positions 345-671 constitute a Kinesin motor domain; sequence NIRVFCRCRP…LNFASRVRGI (327 aa). Residue 428 to 435 coordinates ATP; that stretch reads GQTGTGKT. Residues 691-742 are a coiled coil; the sequence is MAGRAKQDSKNKDAQIKSMEETIQSLEAKNKAKDLLTMNLQEKIKELEAQLL. Disordered stretches follow at residues 759 to 791 and 946 to 1004; these read DHLH…STAE and SGRR…RQLN. Low complexity predominate over residues 948-958; sequence RRAGAGVAGTT. The segment covering 995 to 1004 has biased composition (polar residues); sequence NNGTSLRQLN.

Belongs to the TRAFAC class myosin-kinesin ATPase superfamily. Kinesin family. KIN-14 subfamily.

In Oryza sativa subsp. japonica (Rice), this protein is Kinesin-like protein KIN-14R.